The primary structure comprises 151 residues: 6,7-dimethyl-8-ribityllumazine synthase (151 aa).

Residues Phe15, 49–51 (AVE), and 73–75 (AVI) contribute to the 5-amino-6-(D-ribitylamino)uracil site. 78 to 79 (ET) is a (2S)-2-hydroxy-3-oxobutyl phosphate binding site. The Proton donor role is filled by His81. Phe106 contacts 5-amino-6-(D-ribitylamino)uracil. Arg120 contacts (2S)-2-hydroxy-3-oxobutyl phosphate.

The protein belongs to the DMRL synthase family. Forms an icosahedral capsid composed of 60 subunits, arranged as a dodecamer of pentamers.

It carries out the reaction (2S)-2-hydroxy-3-oxobutyl phosphate + 5-amino-6-(D-ribitylamino)uracil = 6,7-dimethyl-8-(1-D-ribityl)lumazine + phosphate + 2 H2O + H(+). It functions in the pathway cofactor biosynthesis; riboflavin biosynthesis; riboflavin from 2-hydroxy-3-oxobutyl phosphate and 5-amino-6-(D-ribitylamino)uracil: step 1/2. Functionally, catalyzes the formation of 6,7-dimethyl-8-ribityllumazine by condensation of 5-amino-6-(D-ribitylamino)uracil with 3,4-dihydroxy-2-butanone 4-phosphate. This is the penultimate step in the biosynthesis of riboflavin. This is 6,7-dimethyl-8-ribityllumazine synthase from Coxiella burnetii (strain CbuG_Q212) (Coxiella burnetii (strain Q212)).